Here is a 279-residue protein sequence, read N- to C-terminus: MGIVFNYIDPVAFNLGPLSVRWYGIIIAVGILLGYFVAQRALVKAGLHKDTLVDIIFYSALFGFIAARIYFVIFQWPYYAENPSEIIKIWHGGIAIHGGLIGGFIAGVIVCKVKNLNPFQIGDIVAPSIILAQGIGRWGNFMNHEAHGGPVSRAFLEQLHLPNFIIENMYINGQYYHPTFLYESIWDVAGFIILVNIRKHLKLGETFFLYLTWYSIGRFFIEGLRTDSLMLTSNIRVAQLVSILLILISISLIVYRRIKYNPPLYSKVGALPWPTKKVK.

Helical transmembrane passes span 18 to 38, 55 to 75, and 89 to 109; these read LSVR…YFVA, IIFY…VIFQ, and IWHG…AGVI. Arg-137 serves as a coordination point for a 1,2-diacyl-sn-glycero-3-phospho-(1'-sn-glycerol). A run of 2 helical transmembrane segments spans residues 203 to 223 and 235 to 255; these read LGET…FIEG and IRVA…LIVY.

This sequence belongs to the Lgt family.

The protein localises to the cell membrane. It carries out the reaction L-cysteinyl-[prolipoprotein] + a 1,2-diacyl-sn-glycero-3-phospho-(1'-sn-glycerol) = an S-1,2-diacyl-sn-glyceryl-L-cysteinyl-[prolipoprotein] + sn-glycerol 1-phosphate + H(+). The protein operates within protein modification; lipoprotein biosynthesis (diacylglyceryl transfer). Catalyzes the transfer of the diacylglyceryl group from phosphatidylglycerol to the sulfhydryl group of the N-terminal cysteine of a prolipoprotein, the first step in the formation of mature lipoproteins. In Staphylococcus aureus (strain Mu3 / ATCC 700698), this protein is Phosphatidylglycerol--prolipoprotein diacylglyceryl transferase.